We begin with the raw amino-acid sequence, 168 residues long: uncharacterized protein (168 aa).

The chain crosses the membrane as a helical span at residues 5–24; it reads IAWASACLLLVMLTGFFTIG.

The protein localises to the membrane. This is an uncharacterized protein from Bacillus subtilis (strain 168).